A 408-amino-acid chain; its full sequence is MSPCENDPPINWKRNLIVAWLGCFLTGAAFSLVMPFLPLYVEQLGVTGHSALNMWSGIVFSITFLFSAIASPFWGGLADRKGRKLMLLRSALGMGIVMVLMGLAQNIWQFLILRALLGLLGGFVPNANALIATQVPRNKSGWALGTLSTGGVSGALLGPMAGGLLADSYGLRPVFFITASVLILCFFVTLFCIREKFQPVSKKEMLHMREVVTSLKNPKLVLSLFVTTLIIQVATGSIAPILTLYVRELAGNVSNVAFISGMIASVPGVAALLSAPRLGKLGDRIGPEKILITALIFSVLLLIPMSYVQTPLQLGILRFLLGAADGALLPAVQTLLVYNSSNQIAGRIFSYNQSFRDIGNVTGPLMGAAISANYGFRAVFLVTAGVVLFNAVYSWNSLRRRRIPQVSN.

Transmembrane regions (helical) follow at residues 16–36 (LIVAWLGCFLTGAAFSLVMPF), 58–78 (IVFSITFLFSAIASPFWGGLA), 92–112 (LGMGIVMVLMGLAQNIWQFLI), 115–135 (ALLGLLGGFVPNANALIATQV), 146–166 (TLSTGGVSGALLGPMAGGLLA), 173–193 (PVFFITASVLILCFFVTLFCI), 224–244 (LFVTTLIIQVATGSIAPILTL), 256–276 (VAFISGMIASVPGVAALLSAP), 290–310 (ILITALIFSVLLLIPMSYVQT), 319–339 (FLLGAADGALLPAVQTLLVYN), and 378–398 (AVFLVTAGVVLFNAVYSWNSL).

Belongs to the major facilitator superfamily. DHA1 family. MdtG (TC 2.A.1.2.20) subfamily.

The protein resides in the cell inner membrane. Its function is as follows. Confers resistance to fosfomycin and deoxycholate. In Escherichia coli O7:K1 (strain IAI39 / ExPEC), this protein is Multidrug resistance protein MdtG.